We begin with the raw amino-acid sequence, 498 residues long: MSKRPSISFSDFAAPEKGVSIVLVAKGGGFADEAAQAAGGAEKIKRIAEISGFTGALGKTAEAIETTSSGVDKIVLVGVGEPGKLGNDDWLKIGGAAFSRIGKAERATVTLALPETTIAGDEAADLALGMILRSYKFERYKTRKNNEENGDPKHAAKISICVADPHTAKRAFEVAEAVADGVIQARNLVNEPANILGPVEFAQEAEKLEKLGVKIEVLGEKEMKKLGMGALLGVAQGSVRPPRLVIMEWQGAKSKEKPVAFVGKGVVFDTGGISIKPAAGMEDMKGDMGGAAAVTGLMRALAGRKAKVNAIGIIGLVENMPDGNAQRPGDIVTSMSGQTIEVINTDAEGRLVLADALHYTNDRFKPRFIINLATLTGAVMVALGQYHAGLFSNDDELADQLYDAGQLTGEKLWRLPLGTEYDKMIDSKFADMKNSAGRYGGSITAAQFLKRFVGETAWAHLDVAGTAMGSPANEYSQTWASGYGVRLLDRLVRDHFES.

Residues Lys-264 and Asp-269 each coordinate Mn(2+). The active site involves Lys-276. Residues Asp-287, Asp-346, and Glu-348 each coordinate Mn(2+). Residue Arg-350 is part of the active site.

It belongs to the peptidase M17 family. The cofactor is Mn(2+).

Its subcellular location is the cytoplasm. The catalysed reaction is Release of an N-terminal amino acid, Xaa-|-Yaa-, in which Xaa is preferably Leu, but may be other amino acids including Pro although not Arg or Lys, and Yaa may be Pro. Amino acid amides and methyl esters are also readily hydrolyzed, but rates on arylamides are exceedingly low.. It catalyses the reaction Release of an N-terminal amino acid, preferentially leucine, but not glutamic or aspartic acids.. In terms of biological role, presumably involved in the processing and regular turnover of intracellular proteins. Catalyzes the removal of unsubstituted N-terminal amino acids from various peptides. This is Probable cytosol aminopeptidase from Brucella anthropi (strain ATCC 49188 / DSM 6882 / CCUG 24695 / JCM 21032 / LMG 3331 / NBRC 15819 / NCTC 12168 / Alc 37) (Ochrobactrum anthropi).